The sequence spans 225 residues: MSQYGFVRVPREVEKAIPVVNAPRPRAVVPPPNSETARLVREYAAKELTAPVLNHSLRVFQYSVAIIRDQFPAWDLDQEVLYVTCLLHDIATTDKNMRATKMSFEYYGGILSRELVFNATGGNQDYADAVTEAIIRHQDLTGTGYITTLGLILQIATTLDNVGSNTDLIHIDTVSAINEQFPRLHWLSCFATVVDTENSRKPWGHTSSLGDDFSKKVICNTFGYN.

One can recognise an HD domain in the interval 52–162 (VLNHSLRVFQ…LQIATTLDNV (111 aa)).

The protein belongs to the cyanamide dehydrase family. Homohexamer. Requires Zn(2+) as cofactor.

The enzyme catalyses urea = cyanamide + H2O. In terms of biological role, cyanamide hydratase involved in the detoxification and/or utilization of cyanamide, a toxic nitrile compound distributed widely in the environment. The protein is Cyanamide hydratase DDI2 of Saccharomyces cerevisiae (strain ATCC 204508 / S288c) (Baker's yeast).